A 649-amino-acid chain; its full sequence is Exolysin (649 aa).

Residues 37 to 57 (LIYTIIVLVVAAVVGLVIFIV) traverse the membrane as a helical segment. A coiled-coil region spans residues 184-268 (KDIIDNKLRE…KKATDDFKKK (85 aa)). A compositionally biased stretch (basic and acidic residues) spans 258–275 (AKKATDDFKKKKQADKNK). Positions 258–325 (AKKATDDFKK…QFQTRDSKGQ (68 aa)) are disordered. Over residues 278-312 (ASKPSPGPKPAPKPSPGPKPAPKPSPGPKPSPGPS) the composition is skewed to pro residues. Residues 407–649 (GGGGGGGNVS…KNVKISKWSP (243 aa)) are catalytic.

Requires Ca(2+) as cofactor. Mg(2+) is required as a cofactor.

The protein localises to the membrane. The protein resides in the virion. Its activity is regulated as follows. Inhibited by Mn(2+), Cu(2+), Co(2+), Fe(2+), Zn(2+), Ni(2+), EDTA and EGTA. In terms of biological role, during viral entry, involved in the degradation of the host cell wall at the site of attachment. In Chlorella (PBCV-1), this protein is Exolysin.